The following is a 281-amino-acid chain: Tryptophan 2,3-dioxygenase (281 aa).

Residues 50 to 54, tyrosine 112, and arginine 116 each bind substrate; that span reads FIIQH. Histidine 239 is a binding site for heme. Threonine 253 serves as a coordination point for substrate.

This sequence belongs to the tryptophan 2,3-dioxygenase family. As to quaternary structure, homotetramer. Requires heme as cofactor.

It carries out the reaction L-tryptophan + O2 = N-formyl-L-kynurenine. It functions in the pathway amino-acid degradation; L-tryptophan degradation via kynurenine pathway; L-kynurenine from L-tryptophan: step 1/2. Its function is as follows. Heme-dependent dioxygenase that catalyzes the oxidative cleavage of the L-tryptophan (L-Trp) pyrrole ring and converts L-tryptophan to N-formyl-L-kynurenine. Catalyzes the oxidative cleavage of the indole moiety. This chain is Tryptophan 2,3-dioxygenase, found in Saccharopolyspora erythraea (strain ATCC 11635 / DSM 40517 / JCM 4748 / NBRC 13426 / NCIMB 8594 / NRRL 2338).